The chain runs to 622 residues: Sodium/potassium/calcium exchanger 4 (622 aa).

The first 38 residues, 1 to 38, serve as a signal peptide directing secretion; it reads MALRGTLRPLKVRRRREMLPQQVGFVCAVLALVCCASG. At 39–97 the chain is on the extracellular side; it reads LFGSLGHKTASASKRVLPDTWRNRKLMAPVNGTQTAKNCTDPAIHEFPTDLFSNKERQH. Residues Asn-69 and Asn-76 are each glycosylated (N-linked (GlcNAc...) asparagine). Residues 98–118 traverse the membrane as a helical segment; it reads GAVLLHILGALYMFYALAIVC. At 119–142 the chain is on the cytoplasmic side; that stretch reads DDFFVPSLEKICERLHLSEDVAGA. An Alpha-1 repeat occupies 139-179; the sequence is VAGATFMAAGSSTPELFASVIGVFITHGDVGVGTIVGSAVF. A helical membrane pass occupies residues 143-163; the sequence is TFMAAGSSTPELFASVIGVFI. The Extracellular portion of the chain corresponds to 164–172; it reads THGDVGVGT. Residues 173 to 193 form a helical membrane-spanning segment; that stretch reads IVGSAVFNILCIIGVCGLFAG. At 194–200 the chain is on the cytoplasmic side; the sequence is QVVRLTW. The helical transmembrane segment at 201-221 threads the bilayer; it reads WAVCRDSVYYTISVIVLIVFI. At 222 to 224 the chain is on the extracellular side; that stretch reads YDE. The helical transmembrane segment at 225–245 threads the bilayer; the sequence is QIVWWEGLVLIILYVFYILIM. At 246–457 the chain is on the cytoplasmic side; that stretch reads KYNVKMQAFF…RWEKFFMVTF (212 aa). The interval 358-410 is disordered; that stretch reads ANGVSSKPLQNGRHENIENGNVPVENPEDPQQNQEQQPPPQPPPPEPEPVEAD. Residues 380-393 are compositionally biased toward low complexity; the sequence is PVENPEDPQQNQEQ. A compositionally biased stretch (pro residues) spans 394–404; that stretch reads QPPPQPPPPEP. Residues 458-478 traverse the membrane as a helical segment; sequence ITATLWIAVFSYIMVWLVTII. A topological domain (extracellular) is located at residue Gly-479. Residues 480–500 form a helical membrane-spanning segment; that stretch reads YTLGIPDVIMGITFLAAGTSV. The Alpha-2 repeat unit spans residues 495-526; the sequence is AAGTSVPDCMASLIVARQGLGDMAVSNTIGSN. The Cytoplasmic segment spans residues 501–526; sequence PDCMASLIVARQGLGDMAVSNTIGSN. Residues 527–547 traverse the membrane as a helical segment; the sequence is VFDILVGLGVPWGLQTMVVNY. The Extracellular portion of the chain corresponds to 548–557; that stretch reads GSTVKINSRG. The chain crosses the membrane as a helical span at residues 558–578; it reads LVYSVVLLLGSVALTVLGIHL. At 579–586 the chain is on the cytoplasmic side; the sequence is NKWRLDRK. Residues 587–607 traverse the membrane as a helical segment; that stretch reads LGVYVLVLYAIFLCFSIMIEF. The Extracellular portion of the chain corresponds to 608-622; sequence NVFTFVNLPMCREDD.

Belongs to the Ca(2+):cation antiporter (CaCA) (TC 2.A.19) family. SLC24A subfamily. In terms of tissue distribution, expressed abundantly in all regions of the brain, aorta, lung and thymus. Expressed at lower levels in the stomach and intestine.

It localises to the cell membrane. The protein resides in the cytoplasm. The enzyme catalyses Ca(2+)(out) + K(+)(out) + 4 Na(+)(in) = Ca(2+)(in) + K(+)(in) + 4 Na(+)(out). Its function is as follows. Calcium, potassium:sodium antiporter that transports 1 Ca(2+) and 1 K(+) in exchange for 4 Na(+). Controls the rapid response termination and proper regulation of adaptation in olfactory sensory neurons (OSNs) which subsequently influences how odor information is encoded and perceived. May play a role in calcium transport during amelogenesis. The chain is Sodium/potassium/calcium exchanger 4 from Homo sapiens (Human).